A 280-amino-acid chain; its full sequence is Dermonecrotic toxin LgSicTox-alphaIC1 (280 aa).

Residue histidine 12 is part of the active site. Mg(2+) contacts are provided by glutamate 32 and aspartate 34. Histidine 48 (nucleophile) is an active-site residue. Disulfide bonds link cysteine 52/cysteine 58 and cysteine 54/cysteine 197. Residue aspartate 92 participates in Mg(2+) binding.

Belongs to the arthropod phospholipase D family. Class II subfamily. It depends on Mg(2+) as a cofactor. As to expression, expressed by the venom gland.

It localises to the secreted. It catalyses the reaction an N-(acyl)-sphingosylphosphocholine = an N-(acyl)-sphingosyl-1,3-cyclic phosphate + choline. It carries out the reaction an N-(acyl)-sphingosylphosphoethanolamine = an N-(acyl)-sphingosyl-1,3-cyclic phosphate + ethanolamine. The enzyme catalyses a 1-acyl-sn-glycero-3-phosphocholine = a 1-acyl-sn-glycero-2,3-cyclic phosphate + choline. The catalysed reaction is a 1-acyl-sn-glycero-3-phosphoethanolamine = a 1-acyl-sn-glycero-2,3-cyclic phosphate + ethanolamine. In terms of biological role, dermonecrotic toxins cleave the phosphodiester linkage between the phosphate and headgroup of certain phospholipids (sphingolipid and lysolipid substrates), forming an alcohol (often choline) and a cyclic phosphate. This toxin acts on sphingomyelin (SM) with high activity. It may also act on ceramide phosphoethanolamine (CPE), lysophosphatidylcholine (LPC) and lysophosphatidylethanolamine (LPE), but not on lysophosphatidylserine (LPS), and lysophosphatidylglycerol (LPG). It acts by transphosphatidylation, releasing exclusively cyclic phosphate products as second products. Induces platelet aggregation in platelet rich plasma, but not in washed platelet, indicating that this activity is dependent on plasma components. Also induces hemolysis. In vivo, the recombinant protein evokes an intense inflammatory reaction and dermonecrosis, similar to those induced by L.gaucho total venom. Is a good immunogen, capable of inducing immunoprotection in test animals. Functionally, anionic antimicrobial peptide that shows antimicrobial activity against Gram-negative bacteria (MIC=1.15-4.6 uM) (tested on E.coli, P.aeruginosa, and E.cloacae), but not on Gram-negative bacteria (M.luteus, S.aureus, and B.subtilis), neither on fungi and yeasts (A.niger, C.albicans and C.krusei). Does not show hemolytic effects against human erythrocytes, and has no cytotoxic effects against human cervical carcinoma cells (HeLa). The protein is Dermonecrotic toxin LgSicTox-alphaIC1 of Loxosceles gaucho (Spider).